The following is a 448-amino-acid chain: Delta(14)-sterol reductase ERG24 (448 aa).

7 helical membrane-spanning segments follow: residues 18 to 38, 75 to 95, 108 to 128, 157 to 177, 251 to 271, 279 to 299, and 318 to 338; these read ISGA…FYLL, CWSA…LLPG, VLNY…LLLA, IIIC…ISFI, VTDS…DGVL, MIDI…LAWV, and NLGW…FYIF. NADP(+) is bound by residues Lys-345, Arg-349, Leu-368, Trp-373, and 380–381; that span reads NY. A helical transmembrane segment spans residues 394-414; the sequence is PTGFQTPLTYFYVIYFASLLI. NADP(+) is bound by residues Asp-420, 424–428, and Tyr-435; that span reads CRAKY.

This sequence belongs to the ERG4/ERG24 family.

The protein localises to the endoplasmic reticulum membrane. The enzyme catalyses 4,4-dimethyl-5alpha-cholesta-8,24-dien-3beta-ol + NADP(+) = 4,4-dimethyl-5alpha-cholesta-8,14,24-trien-3beta-ol + NADPH + H(+). It participates in steroid biosynthesis; zymosterol biosynthesis; zymosterol from lanosterol: step 2/6. Functionally, C-14 sterol reductase; part of the third module of ergosterol biosynthesis pathway that includes the late steps of the pathway. ERG24 reduces the C14=C15 double bond of 4,4-dimethyl-cholesta-8,14,24-trienol to produce 4,4-dimethyl-cholesta-8,24-dienol. The third module or late pathway involves the ergosterol synthesis itself through consecutive reactions that mainly occur in the endoplasmic reticulum (ER) membrane. Firstly, the squalene synthase ERG9 catalyzes the condensation of 2 farnesyl pyrophosphate moieties to form squalene, which is the precursor of all steroids. Squalene synthase is crucial for balancing the incorporation of farnesyl diphosphate (FPP) into sterol and nonsterol isoprene synthesis. Secondly, the squalene epoxidase ERG1 catalyzes the stereospecific oxidation of squalene to (S)-2,3-epoxysqualene, which is considered to be a rate-limiting enzyme in steroid biosynthesis. Then, the lanosterol synthase ERG7 catalyzes the cyclization of (S)-2,3 oxidosqualene to lanosterol, a reaction that forms the sterol core. In the next steps, lanosterol is transformed to zymosterol through a complex process involving various demethylation, reduction and desaturation reactions. The lanosterol 14-alpha-demethylase ERG11 (also known as CYP51) catalyzes C14-demethylation of lanosterol to produce 4,4'-dimethyl cholesta-8,14,24-triene-3-beta-ol, which is critical for ergosterol biosynthesis. The C-14 reductase ERG24 reduces the C14=C15 double bond of 4,4-dimethyl-cholesta-8,14,24-trienol to produce 4,4-dimethyl-cholesta-8,24-dienol. 4,4-dimethyl-cholesta-8,24-dienol is substrate of the C-4 demethylation complex ERG25-ERG26-ERG27 in which ERG25 catalyzes the three-step monooxygenation required for the demethylation of 4,4-dimethyl and 4alpha-methylsterols, ERG26 catalyzes the oxidative decarboxylation that results in a reduction of the 3-beta-hydroxy group at the C-3 carbon to an oxo group, and ERG27 is responsible for the reduction of the keto group on the C-3. ERG28 has a role as a scaffold to help anchor ERG25, ERG26 and ERG27 to the endoplasmic reticulum and ERG29 regulates the activity of the iron-containing C4-methylsterol oxidase ERG25. Then, the sterol 24-C-methyltransferase ERG6 catalyzes the methyl transfer from S-adenosyl-methionine to the C-24 of zymosterol to form fecosterol. The C-8 sterol isomerase ERG2 catalyzes the reaction which results in unsaturation at C-7 in the B ring of sterols and thus converts fecosterol to episterol. The sterol-C5-desaturase ERG3 then catalyzes the introduction of a C-5 double bond in the B ring to produce 5-dehydroepisterol. The C-22 sterol desaturase ERG5 further converts 5-dehydroepisterol into ergosta-5,7,22,24(28)-tetraen-3beta-ol by forming the C-22(23) double bond in the sterol side chain. Finally, ergosta-5,7,22,24(28)-tetraen-3beta-ol is substrate of the C-24(28) sterol reductase ERG4 to produce ergosterol. The polypeptide is Delta(14)-sterol reductase ERG24 (Candida albicans (strain SC5314 / ATCC MYA-2876) (Yeast)).